The chain runs to 361 residues: MSTATPLAPTPVTTTDVLIVGAGPVGLFAAFQAGVLGLRCELIDVLDRAGGQCTELYPEKPIYDIPAVPGCLAQDLVDRLLEQCAPFAFPMHFGQRAESLSEIPRQPAPDGHAAHERLLVTTDGGKRFDVSAVLICAGAGAFAPQRVSLPEAPALEGRHVHYAVRDVSRFAGKRVVVAGGGDSALDWALALRKVAARVTLLHRREGFRAADGTVAEMREAVAAGEMDFVVGMLGALRTEGQDGPLTEVEVRTRDGSTVLPADELVALYGLVSEPGPIAQWDMDMRAGRILVDTTTYESSRRGIFAAGDIAYYTNKQKLILSGFHEAALALRRAYHYAFPEKALVHVHTSNNAALKEKLTHA.

FAD is bound by residues Asp-44, Gln-52, Tyr-57, Ala-97, Phe-142, Asp-308, and Ser-349.

It belongs to the ferredoxin--NADP reductase type 2 family. As to quaternary structure, homodimer. It depends on FAD as a cofactor.

It carries out the reaction 2 reduced [2Fe-2S]-[ferredoxin] + NADP(+) + H(+) = 2 oxidized [2Fe-2S]-[ferredoxin] + NADPH. This chain is Ferredoxin--NADP reductase 1, found in Cupriavidus necator (strain ATCC 17699 / DSM 428 / KCTC 22496 / NCIMB 10442 / H16 / Stanier 337) (Ralstonia eutropha).